A 260-amino-acid polypeptide reads, in one-letter code: Imidazole glycerol phosphate synthase subunit HisF (260 aa).

Residues Asp11 and Asp130 contribute to the active site.

It belongs to the HisA/HisF family. As to quaternary structure, heterodimer of HisH and HisF.

Its subcellular location is the cytoplasm. It catalyses the reaction 5-[(5-phospho-1-deoxy-D-ribulos-1-ylimino)methylamino]-1-(5-phospho-beta-D-ribosyl)imidazole-4-carboxamide + L-glutamine = D-erythro-1-(imidazol-4-yl)glycerol 3-phosphate + 5-amino-1-(5-phospho-beta-D-ribosyl)imidazole-4-carboxamide + L-glutamate + H(+). The protein operates within amino-acid biosynthesis; L-histidine biosynthesis; L-histidine from 5-phospho-alpha-D-ribose 1-diphosphate: step 5/9. Functionally, IGPS catalyzes the conversion of PRFAR and glutamine to IGP, AICAR and glutamate. The HisF subunit catalyzes the cyclization activity that produces IGP and AICAR from PRFAR using the ammonia provided by the HisH subunit. The sequence is that of Imidazole glycerol phosphate synthase subunit HisF from Psychrobacter arcticus (strain DSM 17307 / VKM B-2377 / 273-4).